A 102-amino-acid chain; its full sequence is Small ribosomal subunit protein eS24 (102 aa).

The protein belongs to the eukaryotic ribosomal protein eS24 family.

The protein is Small ribosomal subunit protein eS24 of Methanococcus maripaludis (strain DSM 14266 / JCM 13030 / NBRC 101832 / S2 / LL).